A 274-amino-acid chain; its full sequence is Hydroxyethylthiazole kinase (274 aa).

Methionine 49 lines the substrate pocket. Arginine 125 and threonine 173 together coordinate ATP. Glycine 200 contributes to the substrate binding site.

The protein belongs to the Thz kinase family. It depends on Mg(2+) as a cofactor.

It carries out the reaction 5-(2-hydroxyethyl)-4-methylthiazole + ATP = 4-methyl-5-(2-phosphooxyethyl)-thiazole + ADP + H(+). It functions in the pathway cofactor biosynthesis; thiamine diphosphate biosynthesis; 4-methyl-5-(2-phosphoethyl)-thiazole from 5-(2-hydroxyethyl)-4-methylthiazole: step 1/1. In terms of biological role, catalyzes the phosphorylation of the hydroxyl group of 4-methyl-5-beta-hydroxyethylthiazole (THZ). The protein is Hydroxyethylthiazole kinase of Desulfosudis oleivorans (strain DSM 6200 / JCM 39069 / Hxd3) (Desulfococcus oleovorans).